The sequence spans 112 residues: Larval cuticle protein 4 (112 aa).

An N-terminal signal peptide occupies residues 1–16 (MFKILLVCALVALVAA). Positions 31 to 92 (ADGFVSKLVL…PQSDLLPTPP (62 aa)) constitute a Chitin-binding type R&amp;R domain.

Its function is as follows. Component of the larval cuticle. This is Larval cuticle protein 4 (Lcp4) from Drosophila melanogaster (Fruit fly).